Consider the following 1416-residue polypeptide: Non-structural polyprotein 1AB (1416 aa).

A coiled-coil region spans residues 104 to 146 (KLIHKANALQERLRLSQEEKATLTLDVQFLQHENVRLKELISK). Helical transmembrane passes span 154 to 174 (MKWIIVGAVLTFLSLIPGGYA), 239 to 259 (VFYYIHYYEMWNIFMFVLAIG), 286 to 306 (VLPTIPFHTTMTLWVMNTLMV), 313 to 333 (LLAITMAILAPILGIIFLCFM), and 344 to 364 (GLIATAVLIAGGHACLTLTGT). Residues H461, D489, and S551 each act as charge relay system; for serine protease activity in the active site. Positions 587 to 614 (VKAPSQVELLKEEIERLKAQLNSAAENP) form a coiled coil. Residue Y693 is modified to O-(5'-phospho-RNA)-tyrosine. The interval 752–815 (NFDQAKPTPA…DPQPYSQTYG (64 aa)) is disordered. Residues 783–795 (SQKKDKQLEHEQQ) show a composition bias toward basic and acidic residues. Residues 805 to 814 (NDPQPYSQTY) are compositionally biased toward polar residues. The RdRp catalytic domain occupies 1161-1287 (KYFIEFDWTR…TTPSVPENYE (127 aa)).

It belongs to the astroviridae polyprotein 1AB family. As to quaternary structure, monomer. In terms of processing, cleaved by the viral and host proteases. The protease is probably autocatalytically cleaved.

The protein resides in the host membrane. It catalyses the reaction RNA(n) + a ribonucleoside 5'-triphosphate = RNA(n+1) + diphosphate. Responsible for the cleavage of the polyprotein into functional products. Its function is as follows. Protein covalently attached to the 5' extremity of the genomic and subgenomic RNAs. It may serve as a primer for the replicase. This Homo sapiens (Human) protein is Non-structural polyprotein 1AB (ORF1).